A 141-amino-acid chain; its full sequence is Hemoglobin subunit alpha (141 aa).

One can recognise a Globin domain in the interval 1 to 141 (VLSSTDKSNV…VSTVLTSKYR (141 aa)). The residue at position 3 (Ser3) is a Phosphoserine. Lys7 and Lys11 each carry N6-succinyllysine. Lys16 carries the post-translational modification N6-acetyllysine; alternate. N6-succinyllysine; alternate is present on Lys16. Tyr24 carries the post-translational modification Phosphotyrosine. Ser35 bears the Phosphoserine mark. Residue Lys40 is modified to N6-succinyllysine. His58 lines the O2 pocket. A heme b-binding site is contributed by His87. The residue at position 102 (Ser102) is a Phosphoserine. Position 108 is a phosphothreonine (Thr108). Phosphoserine is present on residues Ser124 and Ser131. Thr134 and Thr137 each carry phosphothreonine. Position 138 is a phosphoserine (Ser138).

Belongs to the globin family. In terms of assembly, heterotetramer of two alpha chains and two beta chains. Red blood cells.

Functionally, involved in oxygen transport from the lung to the various peripheral tissues. Its function is as follows. Hemopressin acts as an antagonist peptide of the cannabinoid receptor CNR1. Hemopressin-binding efficiently blocks cannabinoid receptor CNR1 and subsequent signaling. The sequence is that of Hemoglobin subunit alpha (HBA) from Pteropus poliocephalus (Grey-headed flying fox).